Consider the following 330-residue polypeptide: Uroporphyrinogen decarboxylase (330 aa).

Substrate is bound by residues 10–14 (RQAGR), Phe-29, Ser-59, Asp-60, Tyr-137, Ser-192, and His-307.

The protein belongs to the uroporphyrinogen decarboxylase family. Homodimer.

It localises to the plastid. The protein localises to the chloroplast. The catalysed reaction is uroporphyrinogen III + 4 H(+) = coproporphyrinogen III + 4 CO2. The protein operates within porphyrin-containing compound metabolism; protoporphyrin-IX biosynthesis; coproporphyrinogen-III from 5-aminolevulinate: step 4/4. In terms of biological role, catalyzes the decarboxylation of four acetate groups of uroporphyrinogen-III to yield coproporphyrinogen-III. This is Uroporphyrinogen decarboxylase (DCUP) from Hordeum vulgare (Barley).